The following is a 331-amino-acid chain: UDP-GalNAc:beta-1,3-N-acetylgalactosaminyltransferase 1 (331 aa).

The Cytoplasmic segment spans residues 1-20; that stretch reads MASALWTVLPSRMSLRSLKW. A helical; Signal-anchor for type II membrane protein transmembrane segment spans residues 21–43; the sequence is SLLLLSLLSFFVMWYLSLPHYNV. Topologically, residues 44 to 331 are lumenal; that stretch reads IERVNWMYFY…VMLRNTTCHY (288 aa). N-linked (GlcNAc...) asparagine glycosylation is found at asparagine 72, asparagine 154, asparagine 198, asparagine 212, and asparagine 326.

Belongs to the glycosyltransferase 31 family. The cofactor is Mg(2+). As to expression, higher expression in heart and brain, and to a lesser extent in lung, placenta, kidney and testis. Lower expression in liver, spleen and stomach. No expression in skeletal muscle.

It is found in the golgi apparatus membrane. It catalyses the reaction a globoside Gb3Cer (d18:1(4E)) + UDP-N-acetyl-alpha-D-galactosamine = a globoside Gb4Cer (d18:1(4E)) + UDP + H(+). Its pathway is protein modification; protein glycosylation. In terms of biological role, transfers N-acetylgalactosamine onto globotriaosylceramide. Plays a critical role in preimplantation stage embryonic development. The chain is UDP-GalNAc:beta-1,3-N-acetylgalactosaminyltransferase 1 from Homo sapiens (Human).